Consider the following 152-residue polypeptide: Interleukin-3 (152 aa).

An N-terminal signal peptide occupies residues 1–19; the sequence is MSCLPVLLLLQLLVSPGLQ. N-linked (GlcNAc...) asparagine glycans are attached at residues Asn-34 and Asn-89. An intrachain disulfide couples Cys-35 to Cys-103.

It belongs to the IL-3 family. In terms of assembly, monomer. Activated T-cells, mast cells, natural killer cells.

Its subcellular location is the secreted. Functionally, granulocyte/macrophage colony-stimulating factors are cytokines that act in hematopoiesis by controlling the production, differentiation, and function of 2 related white cell populations of the blood, the granulocytes and the monocytes-macrophages. Its function is as follows. This CSF induces granulocytes, macrophages, mast cells, stem cells, erythroid cells, eosinophils and megakaryocytes. The polypeptide is Interleukin-3 (IL3) (Hylobates lar (Lar gibbon)).